Here is a 392-residue protein sequence, read N- to C-terminus: Stilbene synthase 6 (392 aa).

Residue 55–58 participates in substrate binding; sequence KFNR. The active site involves C164. Substrate contacts are provided by residues L267 and 305–307; that span reads GGP.

It belongs to the thiolase-like superfamily. Chalcone/stilbene synthases family. In terms of assembly, homodimer.

It is found in the cytoplasm. The enzyme catalyses 4-coumaroyl-CoA + 3 malonyl-CoA + 3 H(+) = trans-resveratrol + 4 CO2 + 4 CoA. It participates in phytoalexin biosynthesis; 3,4',5-trihydroxystilbene biosynthesis; 3,4',5-trihydroxystilbene from trans-4-coumarate: step 2/2. Mediates resistance to pathogens which are sensitive to stilbenes. In Vitis vinifera (Grape), this protein is Stilbene synthase 6 (STS).